The primary structure comprises 336 residues: Dihydroorotate dehydrogenase (quinone) (336 aa).

FMN is bound by residues 62–66 and Thr86; that span reads AGLDK. Lys66 contributes to the substrate binding site. 111 to 115 serves as a coordination point for substrate; sequence NRMGF. 2 residues coordinate FMN: Asn139 and Asn172. Substrate is bound at residue Asn172. Residue Ser175 is the Nucleophile of the active site. Asn177 is a binding site for substrate. Residues Lys217 and Thr245 each coordinate FMN. 246-247 lines the substrate pocket; that stretch reads NT. Residues Gly268, Gly297, and 318-319 each bind FMN; that span reads YS.

Belongs to the dihydroorotate dehydrogenase family. Type 2 subfamily. Monomer. FMN is required as a cofactor.

Its subcellular location is the cell membrane. It carries out the reaction (S)-dihydroorotate + a quinone = orotate + a quinol. The protein operates within pyrimidine metabolism; UMP biosynthesis via de novo pathway; orotate from (S)-dihydroorotate (quinone route): step 1/1. Catalyzes the conversion of dihydroorotate to orotate with quinone as electron acceptor. This Enterobacter sp. (strain 638) protein is Dihydroorotate dehydrogenase (quinone).